A 168-amino-acid chain; its full sequence is Ribosome maturation factor RimM (168 aa).

Residues 95–168 (EEGYYWSDLI…RITVDWGLDY (74 aa)) enclose the PRC barrel domain.

This sequence belongs to the RimM family. As to quaternary structure, binds ribosomal protein uS19.

The protein localises to the cytoplasm. An accessory protein needed during the final step in the assembly of 30S ribosomal subunit, possibly for assembly of the head region. Essential for efficient processing of 16S rRNA. May be needed both before and after RbfA during the maturation of 16S rRNA. It has affinity for free ribosomal 30S subunits but not for 70S ribosomes. The sequence is that of Ribosome maturation factor RimM from Nitrosospira multiformis (strain ATCC 25196 / NCIMB 11849 / C 71).